The chain runs to 189 residues: Ras-like protein 1 (189 aa).

10–17 (GAGGVGKS) lines the GTP pocket. The short motif at 32–40 (YDPTIEDSY) is the Effector region element. GTP contacts are provided by residues 57–61 (DTAGQ) and 116–119 (NKCD). Cysteine methyl ester is present on Cys-186. Cys-186 carries the S-geranylgeranyl cysteine lipid modification. A propeptide spans 187-189 (KML) (removed in mature form).

The protein belongs to the small GTPase superfamily. Ras family.

The protein localises to the cell membrane. It carries out the reaction GTP + H2O = GDP + phosphate + H(+). Alternates between an inactive form bound to GDP and an active form bound to GTP. Activated by a guanine nucleotide-exchange factor (GEF) and inactivated by a GTPase-activating protein (GAP). Functionally, ras proteins bind GDP/GTP and possess intrinsic GTPase activity. Plays a role in eye development by regulating cell growth, survival of postmitotic ommatidial cells and differentiation of photoreceptor cells. During larval development, mediates Ptth/tor signaling leading to the production of ecdysone, a hormone required for the initiation of metamorphosis. This Drosophila grimshawi (Hawaiian fruit fly) protein is Ras-like protein 1.